A 181-amino-acid chain; its full sequence is Ribosome maturation factor RimP (181 aa).

Belongs to the RimP family.

The protein localises to the cytoplasm. Required for maturation of 30S ribosomal subunits. The polypeptide is Ribosome maturation factor RimP (Mycolicibacterium smegmatis (strain ATCC 700084 / mc(2)155) (Mycobacterium smegmatis)).